A 311-amino-acid chain; its full sequence is Tricarboxylate transport protein, mitochondrial (311 aa).

Positions 1–13 (MAAPRAPRALTAA) are cleaved as a propeptide — removed in mature form. Solcar repeat units follow at residues 23–111 (THPG…LSNH), 122–208 (RRGL…LRNW), and 218–303 (MNPL…VVKL). 3 consecutive transmembrane segments (helical) span residues 29–46 (ILAGGLAGGIEICITFPT), 86–105 (GLSSLLYGSIPKAAVRFGMF), and 129–143 (LGAGVAEAVVVVCPM). S156 carries the post-translational modification Phosphoserine. The next 3 helical transmembrane spans lie at 183 to 202 (GLTATVLKQGSNQAIRFFVM), 224 to 241 (GVFGAVAGAASVFGNTPL), and 278 to 297 (GTVPRLGRVCLDVAIVFVIY).

Belongs to the mitochondrial carrier (TC 2.A.29) family. Post-translationally, possesses a short cleavable presequence, which, however, is found to be dispensable both for targeting to mitochondria and insertion into the inner membrane. However, the presequence is required to keep SLC25A1 in a soluble state and thus in an import-competent state. Mature SLC25A1 lacking the presequence is prone to aggregation.

Its subcellular location is the mitochondrion inner membrane. The catalysed reaction is (S)-malate(in) + citrate(out) = (S)-malate(out) + citrate(in). The enzyme catalyses citrate(out) + succinate(in) = citrate(in) + succinate(out). It catalyses the reaction D-threo-isocitrate(in) + citrate(out) = D-threo-isocitrate(out) + citrate(in). It carries out the reaction cis-aconitate(in) + citrate(out) = cis-aconitate(out) + citrate(in). The catalysed reaction is trans-aconitate(in) + citrate(out) = trans-aconitate(out) + citrate(in). The enzyme catalyses phosphoenolpyruvate(in) + citrate(out) = phosphoenolpyruvate(out) + citrate(in). It catalyses the reaction maleate(in) + citrate(out) = maleate(out) + citrate(in). In terms of biological role, mitochondrial electroneutral antiporter that exports citrate from the mitochondria into the cytosol in exchange for malate. Also able to mediate the exchange of citrate for isocitrate, phosphoenolpyruvate, cis-aconitate and to a lesser extent trans-aconitate, maleate and succinate. In the cytoplasm, citrate plays important roles in fatty acid and sterol synthesis, regulation of glycolysis, protein acetylation, and other physiopathological processes. This is Tricarboxylate transport protein, mitochondrial (Slc25a1) from Rattus norvegicus (Rat).